The primary structure comprises 445 residues: tRNA-2-methylthio-N(6)-dimethylallyladenosine synthase (445 aa).

An MTTase N-terminal domain is found at 2–122 (KKAFVKSYGC…LPDLLARSRE (121 aa)). Residues Cys11, Cys47, Cys85, Cys157, Cys161, and Cys164 each contribute to the [4Fe-4S] cluster site. A Radical SAM core domain is found at 143–378 (RTLGASAFLT…LDSQRHAYQR (236 aa)). Positions 378–440 (RAAAGRVFDV…SNSLFGELVS (63 aa)) constitute a TRAM domain.

This sequence belongs to the methylthiotransferase family. MiaB subfamily. In terms of assembly, monomer. It depends on [4Fe-4S] cluster as a cofactor.

The protein resides in the cytoplasm. The catalysed reaction is N(6)-dimethylallyladenosine(37) in tRNA + (sulfur carrier)-SH + AH2 + 2 S-adenosyl-L-methionine = 2-methylsulfanyl-N(6)-dimethylallyladenosine(37) in tRNA + (sulfur carrier)-H + 5'-deoxyadenosine + L-methionine + A + S-adenosyl-L-homocysteine + 2 H(+). Catalyzes the methylthiolation of N6-(dimethylallyl)adenosine (i(6)A), leading to the formation of 2-methylthio-N6-(dimethylallyl)adenosine (ms(2)i(6)A) at position 37 in tRNAs that read codons beginning with uridine. In Methylobacterium radiotolerans (strain ATCC 27329 / DSM 1819 / JCM 2831 / NBRC 15690 / NCIMB 10815 / 0-1), this protein is tRNA-2-methylthio-N(6)-dimethylallyladenosine synthase.